The chain runs to 413 residues: Dolichyl-diphosphooligosaccharide--protein glycosyltransferase 48 kDa subunit (413 aa).

Residues 1-383 lie on the Lumenal side of the membrane; the sequence is GPRSLVLLEN…QYERFIPSAY (383 aa). Residues 384–404 form a helical membrane-spanning segment; it reads PYYAGAFSMMVGLFMFSIVFL. Residues 405–413 lie on the Cytoplasmic side of the membrane; the sequence is HMKEKEKSD.

This sequence belongs to the DDOST 48 kDa subunit family. In terms of assembly, component of the oligosaccharyltransferase (OST) complex.

The protein resides in the endoplasmic reticulum. Its subcellular location is the endoplasmic reticulum membrane. The protein operates within protein modification; protein glycosylation. Its function is as follows. Subunit of the oligosaccharyl transferase (OST) complex that catalyzes the initial transfer of a defined glycan (Glc(3)Man(9)GlcNAc(2) in eukaryotes) from the lipid carrier dolichol-pyrophosphate to an asparagine residue within an Asn-X-Ser/Thr consensus motif in nascent polypeptide chains, the first step in protein N-glycosylation. N-glycosylation occurs cotranslationally and the complex associates with the Sec61 complex at the channel-forming translocon complex that mediates protein translocation across the endoplasmic reticulum (ER). All subunits are required for a maximal enzyme activity. Required for the assembly of both SST3A- and SS3B-containing OST complexes. The protein is Dolichyl-diphosphooligosaccharide--protein glycosyltransferase 48 kDa subunit of Gallus gallus (Chicken).